Consider the following 191-residue polypeptide: HTH-type transcriptional regulator YjdC (191 aa).

An HTH tetR-type domain is found at methionine 1–isoleucine 60.

The polypeptide is HTH-type transcriptional regulator YjdC (yjdC) (Escherichia coli (strain K12)).